Here is a 171-residue protein sequence, read N- to C-terminus: Large ribosomal subunit protein uL10 (171 aa).

This sequence belongs to the universal ribosomal protein uL10 family. As to quaternary structure, part of the ribosomal stalk of the 50S ribosomal subunit. The N-terminus interacts with L11 and the large rRNA to form the base of the stalk. The C-terminus forms an elongated spine to which L12 dimers bind in a sequential fashion forming a multimeric L10(L12)X complex.

Forms part of the ribosomal stalk, playing a central role in the interaction of the ribosome with GTP-bound translation factors. The sequence is that of Large ribosomal subunit protein uL10 from Paracoccus denitrificans (strain Pd 1222).